A 522-amino-acid polypeptide reads, in one-letter code: Protein nucleotidyltransferase YdiU (522 aa).

Residues G109, G111, R112, K132, D144, G145, R195, and R202 each coordinate ATP. D271 functions as the Proton acceptor in the catalytic mechanism. Mg(2+) is bound by residues N272 and D281. Position 281 (D281) interacts with ATP.

Belongs to the SELO family. Mg(2+) serves as cofactor. Mn(2+) is required as a cofactor.

It carries out the reaction L-seryl-[protein] + ATP = 3-O-(5'-adenylyl)-L-seryl-[protein] + diphosphate. The enzyme catalyses L-threonyl-[protein] + ATP = 3-O-(5'-adenylyl)-L-threonyl-[protein] + diphosphate. It catalyses the reaction L-tyrosyl-[protein] + ATP = O-(5'-adenylyl)-L-tyrosyl-[protein] + diphosphate. The catalysed reaction is L-histidyl-[protein] + UTP = N(tele)-(5'-uridylyl)-L-histidyl-[protein] + diphosphate. It carries out the reaction L-seryl-[protein] + UTP = O-(5'-uridylyl)-L-seryl-[protein] + diphosphate. The enzyme catalyses L-tyrosyl-[protein] + UTP = O-(5'-uridylyl)-L-tyrosyl-[protein] + diphosphate. Its function is as follows. Nucleotidyltransferase involved in the post-translational modification of proteins. It can catalyze the addition of adenosine monophosphate (AMP) or uridine monophosphate (UMP) to a protein, resulting in modifications known as AMPylation and UMPylation. The polypeptide is Protein nucleotidyltransferase YdiU (Burkholderia orbicola (strain MC0-3)).